The chain runs to 369 residues: Anhydro-N-acetylmuramic acid kinase (369 aa).

12 to 19 (GTSLDGVD) lines the ATP pocket.

It belongs to the anhydro-N-acetylmuramic acid kinase family.

It catalyses the reaction 1,6-anhydro-N-acetyl-beta-muramate + ATP + H2O = N-acetyl-D-muramate 6-phosphate + ADP + H(+). The protein operates within amino-sugar metabolism; 1,6-anhydro-N-acetylmuramate degradation. Its pathway is cell wall biogenesis; peptidoglycan recycling. Functionally, catalyzes the specific phosphorylation of 1,6-anhydro-N-acetylmuramic acid (anhMurNAc) with the simultaneous cleavage of the 1,6-anhydro ring, generating MurNAc-6-P. Is required for the utilization of anhMurNAc either imported from the medium or derived from its own cell wall murein, and thus plays a role in cell wall recycling. The polypeptide is Anhydro-N-acetylmuramic acid kinase (Escherichia coli O6:K15:H31 (strain 536 / UPEC)).